A 76-amino-acid chain; its full sequence is Acyl carrier protein (76 aa).

Positions 1–75 (MIFEKIKDLI…DIVFYITKNT (75 aa)) constitute a Carrier domain. S35 carries the post-translational modification O-(pantetheine 4'-phosphoryl)serine.

The protein belongs to the acyl carrier protein (ACP) family. Post-translationally, 4'-phosphopantetheine is transferred from CoA to a specific serine of apo-ACP by AcpS. This modification is essential for activity because fatty acids are bound in thioester linkage to the sulfhydryl of the prosthetic group.

The protein localises to the cytoplasm. It functions in the pathway lipid metabolism; fatty acid biosynthesis. Carrier of the growing fatty acid chain in fatty acid biosynthesis. This chain is Acyl carrier protein, found in Aster yellows witches'-broom phytoplasma (strain AYWB).